The chain runs to 223 residues: MSEDQGSGATRVKLVVVGDGAVGKTCLLICYAQNDFPVDYVPTVFENYTATRKRGNEDIKVHLWDTAGQEEYDRLRPLSYPGADVVLLCFSTISQSSYEAIRDKWAPEVNHYIPDVPSILVGTKIDLREQQHPDPNSGKFEPITADMGISMQKQIKAKKYLEVSAKTRQGLEEVFSAAIEIVLESRGMDKKSQDGSSSASGVPSGDKPTKGKAGKKKSGCIIL.

A GTP-binding site is contributed by 18–25 (GDGAVGKT). Residues 40–48 (YVPTVFENY) carry the Effector region motif. GTP contacts are provided by residues 65 to 69 (DTAGQ) and 123 to 126 (TKID). The segment at 187–223 (GMDKKSQDGSSSASGVPSGDKPTKGKAGKKKSGCIIL) is disordered. The segment covering 210 to 223 (KGKAGKKKSGCIIL) has biased composition (basic residues). Cys220 bears the Cysteine methyl ester mark. Cys220 is lipidated: S-geranylgeranyl cysteine. The propeptide at 221 to 223 (IIL) is removed in mature form.

This sequence belongs to the small GTPase superfamily. Rho family. As to quaternary structure, interacts with rgaA.

Its subcellular location is the cell membrane. Specifically required for cytokinesis. The chain is Rho-related protein racE (racE) from Dictyostelium discoideum (Social amoeba).